We begin with the raw amino-acid sequence, 709 residues long: Leucine-rich repeat-containing protein 4B (709 aa).

The signal sequence occupies residues 1–38 (MAQAHIRGSPCPLLPPGRMSWPHGALLLLWLFSPPLRA). In terms of domain architecture, LRRNT spans 50 to 88 (GGGSPPATSCPAACSCSNQASRVICTRRELAEVPASIPV). LRR repeat units lie at residues 89–110 (NTRYLNLQENSIQVIRTDTFKH), 113–134 (HLEILQLSKNLVRKIEVGAFNG), 137–158 (SLNTLELFDNRLTTVPTQAFEY), 161–182 (KLRELWLRNNPIESIPSYAFNR), 185–207 (SLRRLDLGELKRLEYISEAAFEG), 210–231 (NLRYLNLGMCNLKDIPNLTALV), 232–253 (RLEELELSGNRLDLIRPGSFQG), 256–277 (SLRKLWLMHAQVATIERNAFDD), and 280–301 (SLEELNLSHNNLMSLPHDLFTP). Residue Asn226 is glycosylated (N-linked (GlcNAc...) asparagine). N-linked (GlcNAc...) asparagine glycosylation is found at Asn285, Asn335, Asn376, Asn402, Asn424, Asn427, Asn446, and Asn454. The LRRCT domain maps to 313–365 (NPWHCNCDVLWLSWWLKETVPSNTTCCARCHAPAGLKGRYIGELDQSHFTCYA). The Ig-like C2-type domain occupies 366 to 454 (PVIVEPPTDL…GNTTASATLN (89 aa)). An intrachain disulfide couples Cys387 to Cys438. Residues 496–552 (TQPGEEAQQPRGTEKEPPGPTTDGAWGGGRPDAAAPASASTTAPAPRSSRPTEKAFT) form a disordered region. Positions 528–544 (AAAPASASTTAPAPRSS) are enriched in low complexity. A helical membrane pass occupies residues 575-595 (IIIGCFVAITFMAAVMLVAFY). A Phosphoserine modification is found at Ser689.

As to quaternary structure, interacts with PTPRF. Interacts with DLG4. Post-translationally, N-glycosylated. O-glycosylated; contains sialic acid.

The protein localises to the membrane. It is found in the presynaptic cell membrane. Its function is as follows. Synaptic adhesion protein. Regulates the formation of excitatory synapses. The trans-synaptic adhesion between LRRC4B and PTPRF regulates the formation of excitatory synapses in a bidirectional manner. This is Leucine-rich repeat-containing protein 4B (Lrrc4b) from Mus musculus (Mouse).